Reading from the N-terminus, the 206-residue chain is Thymidylate kinase (206 aa).

7–14 (GGEGSGKS) contributes to the ATP binding site.

This sequence belongs to the thymidylate kinase family.

The enzyme catalyses dTMP + ATP = dTDP + ADP. Phosphorylation of dTMP to form dTDP in both de novo and salvage pathways of dTTP synthesis. In Chlamydia pneumoniae (Chlamydophila pneumoniae), this protein is Thymidylate kinase (tmk).